A 220-amino-acid chain; its full sequence is Chloramphenicol acetyltransferase (220 aa).

Catalysis depends on His-187, which acts as the Proton acceptor.

Belongs to the chloramphenicol acetyltransferase family. Homotrimer.

It carries out the reaction chloramphenicol + acetyl-CoA = chloramphenicol 3-acetate + CoA. In terms of biological role, this enzyme is an effector of chloramphenicol resistance in bacteria. The sequence is that of Chloramphenicol acetyltransferase (cat86) from Bacillus pumilus (Bacillus mesentericus).